Reading from the N-terminus, the 232-residue chain is Ribose-5-phosphate isomerase A (232 aa).

Residues 28–31 (TGST), 83–86 (DGAD), and 96–99 (KGGG) contribute to the substrate site. Residue Glu105 is the Proton acceptor of the active site. A substrate-binding site is contributed by Lys123.

Belongs to the ribose 5-phosphate isomerase family. As to quaternary structure, homodimer.

The enzyme catalyses aldehydo-D-ribose 5-phosphate = D-ribulose 5-phosphate. It functions in the pathway carbohydrate degradation; pentose phosphate pathway; D-ribose 5-phosphate from D-ribulose 5-phosphate (non-oxidative stage): step 1/1. Functionally, catalyzes the reversible conversion of ribose-5-phosphate to ribulose 5-phosphate. In Nitrobacter hamburgensis (strain DSM 10229 / NCIMB 13809 / X14), this protein is Ribose-5-phosphate isomerase A.